The following is a 503-amino-acid chain: Probable cytosol aminopeptidase (503 aa).

Mn(2+)-binding residues include Lys-270 and Asp-275. Residue Lys-282 is part of the active site. Mn(2+) contacts are provided by Asp-293, Asp-352, and Glu-354. Arg-356 is a catalytic residue.

This sequence belongs to the peptidase M17 family. Mn(2+) serves as cofactor.

The protein resides in the cytoplasm. It carries out the reaction Release of an N-terminal amino acid, Xaa-|-Yaa-, in which Xaa is preferably Leu, but may be other amino acids including Pro although not Arg or Lys, and Yaa may be Pro. Amino acid amides and methyl esters are also readily hydrolyzed, but rates on arylamides are exceedingly low.. It catalyses the reaction Release of an N-terminal amino acid, preferentially leucine, but not glutamic or aspartic acids.. Functionally, presumably involved in the processing and regular turnover of intracellular proteins. Catalyzes the removal of unsubstituted N-terminal amino acids from various peptides. This is Probable cytosol aminopeptidase from Salmonella typhi.